A 138-amino-acid chain; its full sequence is Probable glycine cleavage system H protein 1 (138 aa).

The region spanning 30-112 (IATVGITDYA…YGRGWIFKLK (83 aa)) is the Lipoyl-binding domain. Position 71 is an N6-lipoyllysine (K71).

It belongs to the GcvH family. As to quaternary structure, the glycine cleavage system is composed of four proteins: P, T, L and H. It depends on (R)-lipoate as a cofactor.

Its function is as follows. The glycine cleavage system catalyzes the degradation of glycine. The H protein shuttles the methylamine group of glycine from the P protein to the T protein. This is Probable glycine cleavage system H protein 1 from Sulfolobus acidocaldarius (strain ATCC 33909 / DSM 639 / JCM 8929 / NBRC 15157 / NCIMB 11770).